Reading from the N-terminus, the 77-residue chain is UPF0291 protein BLi02035/BL02933 (77 aa).

The interval 57–77 (PEGNDVTPEKLKQEKRNRRLH) is disordered.

The protein belongs to the UPF0291 family.

It is found in the cytoplasm. This chain is UPF0291 protein BLi02035/BL02933, found in Bacillus licheniformis (strain ATCC 14580 / DSM 13 / JCM 2505 / CCUG 7422 / NBRC 12200 / NCIMB 9375 / NCTC 10341 / NRRL NRS-1264 / Gibson 46).